The sequence spans 380 residues: Peptide chain release factor 1-like, mitochondrial (380 aa).

Residues 1–26 (MRSRVLWGAARWLWPRRAVGPARRPL) constitute a mitochondrion transit peptide. A coiled-coil region spans residues 63 to 117 (ELLAVIKLLNEKERELRETEHLLHDENEDLRKLAENEITLCQKEITQLKHQIILL). The interval 236-300 (PKDLRIDTKR…LRAKLYSMHL (65 aa)) is GGQ domain. The GGQ signature appears at 250–252 (GGQ). The residue at position 252 (Gln-252) is an N5-methylglutamine.

The protein belongs to the prokaryotic/mitochondrial release factor family. In terms of processing, methylation of glutamine in the GGQ triplet by HEMK1 is conserved from bacteria to mammals. In terms of tissue distribution, expressed in skeletal muscle (at protein level).

The protein resides in the mitochondrion. Functionally, mitochondrial peptide chain release factor that directs the termination of translation in response to the peptide chain termination codons UAA and UAG. The chain is Peptide chain release factor 1-like, mitochondrial from Homo sapiens (Human).